The sequence spans 197 residues: dITP/XTP pyrophosphatase (197 aa).

8–13 contributes to the substrate binding site; sequence TKNKGK. The Mg(2+) site is built by Glu42 and Asp71. Asp71 acts as the Proton acceptor in catalysis. Residues Ser72, 154–157, Lys177, and 182–183 each bind substrate; these read FGYD and HR.

Belongs to the HAM1 NTPase family. Homodimer. Mg(2+) serves as cofactor.

It catalyses the reaction XTP + H2O = XMP + diphosphate + H(+). The catalysed reaction is dITP + H2O = dIMP + diphosphate + H(+). It carries out the reaction ITP + H2O = IMP + diphosphate + H(+). Functionally, pyrophosphatase that catalyzes the hydrolysis of nucleoside triphosphates to their monophosphate derivatives, with a high preference for the non-canonical purine nucleotides XTP (xanthosine triphosphate), dITP (deoxyinosine triphosphate) and ITP. Seems to function as a house-cleaning enzyme that removes non-canonical purine nucleotides from the nucleotide pool, thus preventing their incorporation into DNA/RNA and avoiding chromosomal lesions. The polypeptide is dITP/XTP pyrophosphatase (Oceanobacillus iheyensis (strain DSM 14371 / CIP 107618 / JCM 11309 / KCTC 3954 / HTE831)).